Reading from the N-terminus, the 222-residue chain is Probable pyridoxal 5'-phosphate synthase subunit SNO3 (222 aa).

58–60 (GES) is a binding site for L-glutamine. The Nucleophile role is filled by Cys91. L-glutamine is bound by residues Arg120 and 151–152 (IR). Catalysis depends on charge relay system residues His197 and Glu199.

This sequence belongs to the glutaminase PdxT/SNO family.

It catalyses the reaction aldehydo-D-ribose 5-phosphate + D-glyceraldehyde 3-phosphate + L-glutamine = pyridoxal 5'-phosphate + L-glutamate + phosphate + 3 H2O + H(+). The catalysed reaction is L-glutamine + H2O = L-glutamate + NH4(+). It participates in cofactor biosynthesis; pyridoxal 5'-phosphate biosynthesis. Functionally, catalyzes the hydrolysis of glutamine to glutamate and ammonia as part of the biosynthesis of pyridoxal 5'-phosphate. The resulting ammonia molecule is channeled to the active site of a SNZ isoform. The polypeptide is Probable pyridoxal 5'-phosphate synthase subunit SNO3 (SNO3) (Saccharomyces cerevisiae (strain ATCC 204508 / S288c) (Baker's yeast)).